A 180-amino-acid chain; its full sequence is Large ribosomal subunit protein uL5 (180 aa).

It belongs to the universal ribosomal protein uL5 family. As to quaternary structure, part of the 50S ribosomal subunit; part of the 5S rRNA/L5/L18/L25 subcomplex. Contacts the 5S rRNA and the P site tRNA. Forms a bridge to the 30S subunit in the 70S ribosome.

Functionally, this is one of the proteins that bind and probably mediate the attachment of the 5S RNA into the large ribosomal subunit, where it forms part of the central protuberance. In the 70S ribosome it contacts protein S13 of the 30S subunit (bridge B1b), connecting the 2 subunits; this bridge is implicated in subunit movement. Contacts the P site tRNA; the 5S rRNA and some of its associated proteins might help stabilize positioning of ribosome-bound tRNAs. The sequence is that of Large ribosomal subunit protein uL5 from Streptococcus pyogenes serotype M1.